Reading from the N-terminus, the 688-residue chain is MSVNSEKSSSSERPEPQQKAPLVPPPPPPPPPPPPPLPDPTPPEPEEEILGSDDEEQEDPADYCKGGYHPVKIGDLFNGRYHVIRKLGWGHFSTVWLCWDMQGKRFVAMKVVKSAQHYTETALDEIKLLKCVRESDPSDPNKDMVVQLIDDFKISGMNGIHVCMVFEVLGHHLLKWIIKSNYQGLPVRCVKSIIRQVLQGLDYLHSKCKIIHTDIKPENILMCVDDAYVRRMAAEATEWQKAGAPPPSGSAVSTAPQQKPIGKISKNKKKKLKKKQKRQAELLEKRLQEIEELEREAERKIIEENITSAAPSNDQDGEYCPEVKLKTTGLEEAAEAETAKDNGEAEDQEEKEDAEKENIEKDEDDVDQELANIDPTWIESPKTNGHIENGPFSLEQQLDDEDDDEEDCPNPEEYNLDEPNAESDYTYSSSYEQFNGELPNGRHKIPESQFPEFSTSLFSGSLEPVACGSVLSEGSPLTEQEESSPSHDRSRTVSASSTGDLPKAKTRAADLLVNPLDPRNADKIRVKIADLGNACWVHKHFTEDIQTRQYRSIEVLIGAGYSTPADIWSTACMAFELATGDYLFEPHSGEDYSRDEDHIAHIIELLGSIPRHFALSGKYSREFFNRRGELRHITKLKPWSLFDVLVEKYGWPHEDAAQFTDFLIPMLEMVPEKRASAGECLRHPWLNS.

The disordered stretch occupies residues 1–65 (MSVNSEKSSS…EQEDPADYCK (65 aa)). The span at 22–43 (LVPPPPPPPPPPPPPLPDPTPP) shows a compositional bias: pro residues. Over residues 44–61 (EPEEEILGSDDEEQEDPA) the composition is skewed to acidic residues. The residue at position 52 (Ser52) is a Phosphoserine. Residues 81–684 (YHVIRKLGWG…ASAGECLRHP (604 aa)) enclose the Protein kinase domain. ATP is bound by residues 87-95 (LGWGHFSTV) and Lys110. The active-site Proton acceptor is Asp214. Disordered stretches follow at residues 239-277 (WQKA…KKQK), 329-444 (GLEE…GRHK), and 469-501 (SVLS…TGDL). The span at 265–277 (SKNKKKKLKKKQK) shows a compositional bias: basic residues. At Ser380 the chain carries Phosphoserine. Acidic residues predominate over residues 397-421 (QLDDEDDDEEDCPNPEEYNLDEPNA). Polar residues predominate over residues 423–433 (SDYTYSSSYEQ). Ser475 is subject to Phosphoserine. The residue at position 478 (Thr478) is a Phosphothreonine. Phosphoserine occurs at positions 484, 486, and 490. Residue Thr492 is modified to Phosphothreonine; by PKB/AKT1. Residues Ser494 and Ser497 each carry the phosphoserine modification. Phosphoserine; by CK2 is present on Ser588.

It belongs to the protein kinase superfamily. CMGC Ser/Thr protein kinase family. In terms of assembly, associates with U4/U6-U5 tri-small nuclear ribonucleoproteins (U4/U6-U5 tri-snRNPs). Interacts with PKB/AKT1 in a phosphorylation-dependent manner. The phosphorylated form (by PKB/AKT1) interacts with YWHAB and YWHAE. Interaction with YWHAB suppresses its cleavage by caspases and inhibits the release of its N-terminal pro-apoptotic fragment. Interacts with SFN. Interacts with ACIN1. Interacts with POLR2A/RNA polymerase II; the interaction occurs during the co-transcriptional formation of inappropriate R-loops. It depends on Mg(2+) as a cofactor. Post-translationally, phosphorylation at Thr-492 by PKB/AKT1 enhances its stimulatory activity in triggering cyclin-D1 (CCND1) expression and promoting apoptosis in neurons, which can be blocked by YWHAB. It also enhances its protein kinase activity toward ACIN1 and SRSF2, promotes its nuclear translocation and prevents its proteolytic cleavage. In terms of processing, proteolytically cleaved at Asp-139 and Asp-403 by caspase-3 during apoptotic cell death. Cleavage at Asp-139 which is the major site of cleavage, produces a small N-terminal fragment that translocates into nucleus and promotes VP16-induced apoptosis. As to expression, highly expressed in brain, moderately expressed in heart and skeletal muscle and at low levels in lung, liver, and kidney.

The protein localises to the cytoplasm. It localises to the nucleus. The protein resides in the nucleoplasm. It is found in the nucleus speckle. Its subcellular location is the chromosome. It catalyses the reaction L-seryl-[protein] + ATP = O-phospho-L-seryl-[protein] + ADP + H(+). The enzyme catalyses L-threonyl-[protein] + ATP = O-phospho-L-threonyl-[protein] + ADP + H(+). Activated by phosphorylation on Ser-52 and Ser-588. Its function is as follows. Serine/arginine-rich protein-specific kinase which specifically phosphorylates its substrates at serine residues located in regions rich in arginine/serine dipeptides, known as RS domains and is involved in the phosphorylation of SR splicing factors and the regulation of splicing. Promotes neuronal apoptosis by up-regulating cyclin-D1 (CCND1) expression. This is done by the phosphorylation of SRSF2, leading to the suppression of p53/TP53 phosphorylation thereby relieving the repressive effect of p53/TP53 on cyclin-D1 (CCND1) expression. Phosphorylates ACIN1, and redistributes it from the nuclear speckles to the nucleoplasm, resulting in cyclin A1 but not cyclin A2 up-regulation. Plays an essential role in spliceosomal B complex formation via the phosphorylation of DDX23/PRP28. Probably by phosphorylating DDX23, leads to the suppression of incorrect R-loops formed during transcription; R-loops are composed of a DNA:RNA hybrid and the associated non-template single-stranded DNA. Can mediate hepatitis B virus (HBV) core protein phosphorylation. Plays a negative role in the regulation of HBV replication through a mechanism not involving the phosphorylation of the core protein but by reducing the packaging efficiency of the pregenomic RNA (pgRNA) without affecting the formation of the viral core particles. In Homo sapiens (Human), this protein is SRSF protein kinase 2.